Reading from the N-terminus, the 282-residue chain is Follicle cell protein 3C-1 (282 aa).

The tract at residues 103-156 is disordered; the sequence is EASTETIGNNGTTETTVGEAPIIGSSEGSTRSMEPTTASPLMSTNPSSSSSLVS. Residues 106–118 are compositionally biased toward low complexity; sequence TETIGNNGTTETT. Residues 128–140 are compositionally biased toward polar residues; it reads SEGSTRSMEPTTA. Low complexity predominate over residues 141 to 156; it reads SPLMSTNPSSSSSLVS.

In terms of tissue distribution, expressed in follicle cells during vitelline membrane formation.

The chain is Follicle cell protein 3C-1 (Fcp3C) from Drosophila melanogaster (Fruit fly).